A 563-amino-acid polypeptide reads, in one-letter code: MDIRRTILWMIFSFSLLLLWNNWQIHNGKPSLFGTPPASSAASPAEGQQAAANGQAATPSVPTTPAAAAASTVPGATAAPAAAKVEQVVVSTDVLRLTFDTTGAQLIRAELLKYPTSGQPNKPTVLLDRSPELTYVVQSGLVGAPNGQSFPNHQTPFRLVSTDHELKGDSLQVVFEADSGGLKVTKTYTLHRGRYDIDVQHSLANTSDAPLAPSLYLQLERDGNDPADTSSFYHTFTGVAVYSEQDKFQKITFSDIAKGKGSYIKQADNGWLAVVQHYFATAWVPPQGKQRTNELLQVQPNLYAARSIEAVGTVQPGATAQVDSRLWVGPQDQKAMAAVAPGLELVVDYGWLTIIAKPLFSLLTWLHSLLGNWGWAIVALTVIIKAVFFPLAAASYRSMARMKQVAPRLQALKEKYGDDRQKLNQAMMEMYRTEKINPLGGCLPMVVQIPVFIALYWVLLASVEMRGAPWILWVHDLSVRDPYFILPAVMMATMFLQIKLNPTPPDPIQAKVMMIMPLVFGGMMFFFPAGLVLYWCVNNTLSIAQQWTITRNLQRKAEAAANR.

Residues 6 to 26 form a helical membrane-spanning segment; it reads TILWMIFSFSLLLLWNNWQIH. The disordered stretch occupies residues 36–68; that stretch reads PPASSAASPAEGQQAAANGQAATPSVPTTPAAA. The next 4 helical transmembrane spans lie at 373–393, 443–463, 482–502, and 512–532; these read WGWA…PLAA, LPMV…LASV, PYFI…KLNP, and VMMI…AGLV.

The protein belongs to the OXA1/ALB3/YidC family. Type 1 subfamily. Interacts with the Sec translocase complex via SecD. Specifically interacts with transmembrane segments of nascent integral membrane proteins during membrane integration.

The protein resides in the cell inner membrane. Its function is as follows. Required for the insertion and/or proper folding and/or complex formation of integral membrane proteins into the membrane. Involved in integration of membrane proteins that insert both dependently and independently of the Sec translocase complex, as well as at least some lipoproteins. Aids folding of multispanning membrane proteins. This is Membrane protein insertase YidC from Bordetella petrii (strain ATCC BAA-461 / DSM 12804 / CCUG 43448).